The primary structure comprises 1155 residues: RHO1 GDP-GTP exchange protein 1 (1155 aa).

At M1 the chain carries N-acetylmethionine. The segment covering 100-143 has biased composition (polar residues); that stretch reads NSSPQSFTGDQISPTNKKISINDSTRQDKGNSCTTTSSPSQKRS. Positions 100 to 249 are disordered; it reads NSSPQSFTGD…HSRSKSSPVS (150 aa). Residues S154 and S155 each carry the phosphoserine modification. Over residues 155 to 167 the composition is skewed to low complexity; it reads SPSLLSFSKNSGS. At T180 the chain carries Phosphothreonine. Over residues 190–227 the composition is skewed to low complexity; it reads LHSSFNGKHSSSSTSSLFALESLKTQNRRSSNSSNHSS. Positions 228–243 are enriched in basic residues; sequence QYRRHTNQHQRHHSRS. S433 is subject to Phosphoserine. Positions 464 to 651 constitute a DH domain; sequence KRQEAIYELF…KDLMKRIDRA (188 aa). Residues 842 to 1137 enclose the CNH domain; that stretch reads TNRVNDVLIC…RMLKSYAKKI (296 aa).

Stimulates the exchange of RHO1 GDP-bound form into GTP-bound form. This Saccharomyces cerevisiae (strain ATCC 204508 / S288c) (Baker's yeast) protein is RHO1 GDP-GTP exchange protein 1 (ROM1).